The sequence spans 380 residues: Cytochrome b (380 aa).

4 helical membrane passes run 34–54 (FGSLLGICLITQILTGLLLAM), 78–99 (WLIRNLHANGASFFFICIYFHI), 114–134 (WNTGIILLLTLMATAFVGYVL), and 179–199 (FFALHFLLPFMITGLTLIHLT). Positions 84 and 98 each coordinate heme b. Heme b is bound by residues His183 and His197. His202 is a binding site for a ubiquinone. The next 4 membrane-spanning stretches (helical) occupy residues 227–247 (TKDILGFALMLLPLTTLALFS), 289–309 (LGGVLALAASVLILFLSPLLH), 321–341 (LSQLLFWTLVANLLILTWIGS), and 348–368 (FIIIGQLASTTYFIILLILFP).

Belongs to the cytochrome b family. The cytochrome bc1 complex contains 11 subunits: 3 respiratory subunits (MT-CYB, CYC1 and UQCRFS1), 2 core proteins (UQCRC1 and UQCRC2) and 6 low-molecular weight proteins (UQCRH/QCR6, UQCRB/QCR7, UQCRQ/QCR8, UQCR10/QCR9, UQCR11/QCR10 and a cleavage product of UQCRFS1). This cytochrome bc1 complex then forms a dimer. Heme b serves as cofactor.

The protein localises to the mitochondrion inner membrane. Its function is as follows. Component of the ubiquinol-cytochrome c reductase complex (complex III or cytochrome b-c1 complex) that is part of the mitochondrial respiratory chain. The b-c1 complex mediates electron transfer from ubiquinol to cytochrome c. Contributes to the generation of a proton gradient across the mitochondrial membrane that is then used for ATP synthesis. The polypeptide is Cytochrome b (MT-CYB) (Pygoscelis papua (Gentoo penguin)).